We begin with the raw amino-acid sequence, 812 residues long: 5-methyltetrahydropteroyltriglutamate--homocysteine methyltransferase 3, chloroplastic (812 aa).

A chloroplast-targeting transit peptide spans 1 to 33 (MGQLALQRLQPLASLPRRPPSLPPPSSATPSLP). Residues 13–33 (ASLPRRPPSLPPPSSATPSLP) form a disordered region. Residues 17–27 (RRPPSLPPPSS) are compositionally biased toward pro residues. Residues lysine 66 and asparagine 164 each coordinate 5-methyltetrahydropteroyltri-L-glutamate. The disordered stretch occupies residues 430–456 (MRQASRRSSPRVTNAAVQQDVDAVKKS). Residues 485–487 (IGS) and glutamate 538 contribute to the L-homocysteine site. Residues 485–487 (IGS) and glutamate 538 contribute to the L-methionine site. 5-methyltetrahydropteroyltri-L-glutamate-binding positions include aspartate 543, tyrosine 566, 569–570 (RC), and tryptophan 615. Aspartate 653 contacts L-homocysteine. Aspartate 653 contacts L-methionine. Zn(2+)-binding residues include histidine 695, cysteine 697, histidine 706, aspartate 710, and glutamate 719. The active-site Proton donor is the histidine 749. Position 781 (cysteine 781) interacts with Zn(2+).

This sequence belongs to the vitamin-B12 independent methionine synthase family. The cofactor is Zn(2+). As to expression, expressed in seeds.

It is found in the plastid. The protein resides in the chloroplast. It carries out the reaction 5-methyltetrahydropteroyltri-L-glutamate + L-homocysteine = tetrahydropteroyltri-L-glutamate + L-methionine. The protein operates within amino-acid biosynthesis; L-methionine biosynthesis via de novo pathway; L-methionine from L-homocysteine (MetE route): step 1/1. Functionally, catalyzes the transfer of a methyl group from 5-methyltetrahydrofolate to homocysteine resulting in methionine formation. This chain is 5-methyltetrahydropteroyltriglutamate--homocysteine methyltransferase 3, chloroplastic (MS3), found in Arabidopsis thaliana (Mouse-ear cress).